A 37-amino-acid chain; its full sequence is Cytochrome b6-f complex subunit 5 (37 aa).

Residues 5 to 25 (LLSGIVLGLIPITLAGLFVTA) traverse the membrane as a helical segment.

Belongs to the PetG family. In terms of assembly, the 4 large subunits of the cytochrome b6-f complex are cytochrome b6, subunit IV (17 kDa polypeptide, PetD), cytochrome f and the Rieske protein, while the 4 small subunits are PetG, PetL, PetM and PetN. The complex functions as a dimer.

The protein localises to the plastid. It is found in the chloroplast thylakoid membrane. Its function is as follows. Component of the cytochrome b6-f complex, which mediates electron transfer between photosystem II (PSII) and photosystem I (PSI), cyclic electron flow around PSI, and state transitions. PetG is required for either the stability or assembly of the cytochrome b6-f complex. The chain is Cytochrome b6-f complex subunit 5 from Zygnema circumcarinatum (Green alga).